A 392-amino-acid polypeptide reads, in one-letter code: Large ribosomal subunit protein uL3 (392 aa).

Belongs to the universal ribosomal protein uL3 family. Component of the large ribosomal subunit (LSU). Mature N.crassa ribosomes consist of a small (40S) and a large (60S) subunit. The 40S small subunit contains 1 molecule of ribosomal RNA (18S rRNA) and at least 32 different proteins. The large 60S subunit contains 3 rRNA molecules (26S, 5.8S and 5S rRNA) and at least 42 different proteins.

The protein resides in the cytoplasm. Its function is as follows. Component of the ribosome, a large ribonucleoprotein complex responsible for the synthesis of proteins in the cell. The small ribosomal subunit (SSU) binds messenger RNAs (mRNAs) and translates the encoded message by selecting cognate aminoacyl-transfer RNA (tRNA) molecules. The large subunit (LSU) contains the ribosomal catalytic site termed the peptidyl transferase center (PTC), which catalyzes the formation of peptide bonds, thereby polymerizing the amino acids delivered by tRNAs into a polypeptide chain. The nascent polypeptides leave the ribosome through a tunnel in the LSU and interact with protein factors that function in enzymatic processing, targeting, and the membrane insertion of nascent chains at the exit of the ribosomal tunnel. The sequence is that of Large ribosomal subunit protein uL3 (rpl-3) from Neurospora crassa (strain ATCC 24698 / 74-OR23-1A / CBS 708.71 / DSM 1257 / FGSC 987).